Reading from the N-terminus, the 348-residue chain is Selenide, water dikinase (348 aa).

Cys-17 is an active-site residue. Residues Lys-20 and 47-49 (THD) contribute to the ATP site. Asp-50 is a binding site for Mg(2+). ATP-binding positions include Asp-67, Asp-90, and 138 to 140 (GHT). A Mg(2+)-binding site is contributed by Asp-90. Mg(2+) is bound at residue Asp-226.

Belongs to the selenophosphate synthase 1 family. Class I subfamily. Homodimer. Mg(2+) serves as cofactor.

The catalysed reaction is hydrogenselenide + ATP + H2O = selenophosphate + AMP + phosphate + 2 H(+). Synthesizes selenophosphate from selenide and ATP. This Porphyromonas gingivalis (strain ATCC BAA-308 / W83) protein is Selenide, water dikinase.